We begin with the raw amino-acid sequence, 590 residues long: Polypeptide N-acetylgalactosaminyltransferase 8 (590 aa).

The Cytoplasmic portion of the chain corresponds to 1 to 11 (MCLDIWRHKKK). Residues 12-31 (VLPLLLLMAIGSIIYYLYTL) traverse the membrane as a helical; Signal-anchor for type II membrane protein segment. Residues 32 to 590 (KLEGERDESA…QHFWDNVKTQ (559 aa)) are Lumenal-facing. Residue N77 is glycosylated (N-linked (GlcNAc...) asparagine). Disulfide bonds link C117–C345, C336–C419, C459–C475, C502–C517, and C546–C561. Positions 127–236 (LPSVSVVITY…KGWLEPLIAP (110 aa)) are catalytic subdomain A. D168 provides a ligand contact to substrate. D220 serves as a coordination point for Mn(2+). S221 is a binding site for substrate. H222 is a binding site for Mn(2+). N-linked (GlcNAc...) asparagine glycosylation occurs at N241. Residues 291–353 (PHKNPIMNGG…PCSRVGHLFR (63 aa)) are catalytic subdomain B. W322 is a substrate binding site. H350 contacts Mn(2+). R353 is a substrate binding site. The region spanning 446-573 (ASGVLQSISS…KNHKQQWKFG (128 aa)) is the Ricin B-type lectin domain.

Belongs to the glycosyltransferase 2 family. GalNAc-T subfamily. It depends on Mn(2+) as a cofactor. In terms of tissue distribution, expressed in developing oocytes and egg chambers. During embryonic stages 9-11, expressed in the primordium of the foregut, midgut and hindgut. During embryonic stages 12-13, expressed in the posterior midgut and hindgut. During embryonic stages 14-15, expression continues in the hindgut. No expression detected during embryonic stages 16-17 or in third instar larvae imaginal disks.

Its subcellular location is the golgi apparatus membrane. The enzyme catalyses L-seryl-[protein] + UDP-N-acetyl-alpha-D-galactosamine = a 3-O-[N-acetyl-alpha-D-galactosaminyl]-L-seryl-[protein] + UDP + H(+). It carries out the reaction L-threonyl-[protein] + UDP-N-acetyl-alpha-D-galactosamine = a 3-O-[N-acetyl-alpha-D-galactosaminyl]-L-threonyl-[protein] + UDP + H(+). Its pathway is protein modification; protein glycosylation. Functionally, catalyzes the initial reaction in O-linked oligosaccharide biosynthesis, the transfer of an N-acetyl-D-galactosamine residue to a serine or threonine residue on the protein receptor. It can both act as a peptide transferase that transfers GalNAc onto unmodified peptide substrates, and as a glycopeptide transferase that requires the prior addition of a GalNAc on a peptide before adding additional GalNAc moieties. Prefers both EA2 and the diglycosylated Muc5AC-3/13 as substrates, albeit at very low levels fro Muc5AC-3/13. In Drosophila melanogaster (Fruit fly), this protein is Polypeptide N-acetylgalactosaminyltransferase 8.